A 749-amino-acid chain; its full sequence is Ribosome-releasing factor 2, mitochondrial (749 aa).

Residues 1–22 (MLLLLCNRSVVPRGIRRILRTA) constitute a mitochondrion transit peptide. Residues 44-322 (KNIRNIGILA…AVLKYLPAPN (279 aa)) form the tr-type G domain. Residues 53-60 (AHIDGGKT), 117-121 (DTPGH), and 171-174 (NKMD) each bind GTP.

It belongs to the TRAFAC class translation factor GTPase superfamily. Classic translation factor GTPase family. EF-G/EF-2 subfamily.

Its subcellular location is the mitochondrion. In terms of biological role, mitochondrial GTPase that mediates the disassembly of ribosomes from messenger RNA at the termination of mitochondrial protein biosynthesis. Not involved in the GTP-dependent ribosomal translocation step during translation elongation. This chain is Ribosome-releasing factor 2, mitochondrial, found in Culex quinquefasciatus (Southern house mosquito).